A 592-amino-acid polypeptide reads, in one-letter code: Calnexin (592 aa).

The N-terminal stretch at 1-20 is a signal peptide; it reads MEGKWLLCMLLVLGTAIVEA. The Lumenal portion of the chain corresponds to 21-481; the sequence is HDGHDDDVID…QMIEAAEERP (461 aa). Residues serine 74 and aspartate 117 each coordinate Ca(2+). Residue lysine 137 is modified to N6-acetyllysine. A disulfide bond links cysteine 160 and cysteine 194. Residues tyrosine 164, lysine 166, tyrosine 185, and aspartate 192 each contribute to the an alpha-D-glucoside site. Positions 260 to 345 are disordered; sequence GNLLNDMTPP…AEKPEDWDED (86 aa). Basic and acidic residues predominate over residues 274–319; that stretch reads REIEDPEDRKPEDWDERPKIPDPEAVKPDDWDEDAPAKIPDEEATK. Positions 276 to 409 are p domain (Extended arm); the sequence is IEDPEDRKPE…RKIPNPDFFE (134 aa). 5 consecutive repeat copies span residues 278–290, 295–307, 314–326, 333–345, and 348–358. 4 X approximate repeats stretches follow at residues 278–345 and 348–405; these read DPED…WDED and GEWE…IPNP. Positions 323-345 are enriched in acidic residues; sequence WLDDEPEYVPDPDAEKPEDWDED. The interaction with PPIB stretch occupies residues 326-359; sequence DEPEYVPDPDAEKPEDWDEDMDGEWEAPQIANPK. A disulfide bridge connects residues cysteine 360 and cysteine 366. Repeat copies occupy residues 367–377, 381–391, and 395–405. Position 425 (glutamate 425) interacts with an alpha-D-glucoside. Aspartate 436 is a Ca(2+) binding site. Residues 482–502 form a helical membrane-spanning segment; it reads WLWVVYILTVALPVFLVILFC. S-palmitoyl cysteine attachment occurs at residues cysteine 502 and cysteine 503. Over 503 to 592 the chain is Cytoplasmic; that stretch reads CSGKKQTSAM…SPRNRKPRRE (90 aa). Residues 503–592 form a sufficient to mediate interaction with SGIP1 region; that stretch reads CSGKKQTSAM…SPRNRKPRRE (90 aa). The segment at 511–592 is disordered; it reads AMEYKKTDAP…SPRNRKPRRE (82 aa). A compositionally biased stretch (acidic residues) spans 525 to 547; it reads KEEEEEKEEEKDKGDEEEEGEEK. Position 554 is a phosphoserine (serine 554). Threonine 562 is modified (phosphothreonine). Serine 564 bears the Phosphoserine; by MAPK3 mark. The residue at position 583 (serine 583) is a Phosphoserine.

It belongs to the calreticulin family. As to quaternary structure, interacts with MAPK3/ERK1. Interacts with KCNH2. Associates with ribosomes. Interacts with SGIP1; involved in negative regulation of endocytosis. The palmitoylated form interacts with the ribosome-translocon complex component SSR1, promoting efficient folding of glycoproteins. Interacts with SERPINA2P/SERPINA2 and with the S and Z variants of SERPINA1. Interacts with PPIB. Interacts with ZNRF4. Interacts with SMIM22. Interacts with TMX2. Interacts with TMEM35A/NACHO and CHRNA7. Interacts with reticulophagy regulators RETREG2 and RETREG3. Interacts with DNM1L; may form part of a larger protein complex at the ER-mitochondrial interface during mitochondrial fission. Interacts with ADAM7. Phosphorylated at Ser-564 by MAPK3/ERK1. Phosphorylation by MAPK3/ERK1 increases its association with ribosomes. Post-translationally, palmitoylation by DHHC6 leads to the preferential localization to the perinuclear rough ER. It mediates the association of calnexin with the ribosome-translocon complex (RTC) which is required for efficient folding of glycosylated proteins. In terms of processing, ubiquitinated, leading to proteasomal degradation. Probably ubiquitinated by ZNRF4.

It is found in the endoplasmic reticulum membrane. The protein localises to the mitochondrion membrane. The protein resides in the melanosome membrane. In terms of biological role, calcium-binding protein that interacts with newly synthesized monoglucosylated glycoproteins in the endoplasmic reticulum. It may act in assisting protein assembly and/or in the retention within the ER of unassembled protein subunits. It seems to play a major role in the quality control apparatus of the ER by the retention of incorrectly folded proteins. Associated with partial T-cell antigen receptor complexes that escape the ER of immature thymocytes, it may function as a signaling complex regulating thymocyte maturation. Additionally it may play a role in receptor-mediated endocytosis at the synapse. The polypeptide is Calnexin (CANX) (Pongo abelii (Sumatran orangutan)).